The primary structure comprises 70 residues: Cold shock-like protein CspG (70 aa).

Residues 7–67 (GLVKWFNEEK…GQKGLQAANV (61 aa)) enclose the CSD domain.

It is found in the cytoplasm. In Shewanella violacea (strain JCM 10179 / CIP 106290 / LMG 19151 / DSS12), this protein is Cold shock-like protein CspG (cspG).